A 447-amino-acid chain; its full sequence is 3-O-methyltransferase 2 (447 aa).

Residues 264 to 265 (GG), D287, 318 to 319 (DF), and R334 each bind S-adenosyl-L-methionine. Catalysis depends on H338, which acts as the Proton acceptor.

This sequence belongs to the class I-like SAM-binding methyltransferase superfamily. Cation-independent O-methyltransferase family. COMT subfamily.

Functionally, S-adenosyl-L-methionine-dependent methyltransferase that preferentially catalyzes the methylation of 3-OH phenolic compounds like isovanillic acid and 3-OH-4-Met cinnamic acid. May play a role in promoting lignin degradation by methylating and inactivating free-hydroxyl phenolic compounds, products of lignin cleavage which are known inhibitors of lignin peroxidases. In Phanerochaete chrysosporium (strain RP-78 / ATCC MYA-4764 / FGSC 9002) (White-rot fungus), this protein is 3-O-methyltransferase 2.